Reading from the N-terminus, the 64-residue chain is Probable tautomerase lp_1712 (64 aa).

Catalysis depends on proline 2, which acts as the Proton acceptor; via imino nitrogen.

The protein belongs to the 4-oxalocrotonate tautomerase family.

The sequence is that of Probable tautomerase lp_1712 from Lactiplantibacillus plantarum (strain ATCC BAA-793 / NCIMB 8826 / WCFS1) (Lactobacillus plantarum).